Reading from the N-terminus, the 587-residue chain is Phosphomethylpyrimidine synthase (587 aa).

Substrate is bound by residues Asn218, Met247, Tyr276, His312, 332–334 (SRG), 373–376 (DGLR), and Glu412. His416 serves as a coordination point for Zn(2+). Tyr439 is a binding site for substrate. A Zn(2+)-binding site is contributed by His480. [4Fe-4S] cluster contacts are provided by Cys560, Cys563, and Cys568.

It belongs to the ThiC family. [4Fe-4S] cluster is required as a cofactor.

It carries out the reaction 5-amino-1-(5-phospho-beta-D-ribosyl)imidazole + S-adenosyl-L-methionine = 4-amino-2-methyl-5-(phosphooxymethyl)pyrimidine + CO + 5'-deoxyadenosine + formate + L-methionine + 3 H(+). The protein operates within cofactor biosynthesis; thiamine diphosphate biosynthesis. Functionally, catalyzes the synthesis of the hydroxymethylpyrimidine phosphate (HMP-P) moiety of thiamine from aminoimidazole ribotide (AIR) in a radical S-adenosyl-L-methionine (SAM)-dependent reaction. In Porphyromonas gingivalis (strain ATCC BAA-308 / W83), this protein is Phosphomethylpyrimidine synthase.